A 384-amino-acid chain; its full sequence is Protein V (384 aa).

Disordered stretches follow at residues 1–23 (MDQD…GGRE) and 38–317 (SEPT…TKKG). Residues 7 to 20 (ILKEDSEVEREAPG) show a composition bias toward basic and acidic residues. Over residues 50–59 (LHNTINTPQG) the composition is skewed to polar residues. Ser68 is modified (phosphoserine; by host). The segment covering 83-101 (RSGEESRVSGRTSKPEAEA) has biased composition (basic and acidic residues). Ser125 carries the phosphoserine; by host modification. The segment covering 150 to 168 (GIEDENREMAAHPDKRGED) has biased composition (basic and acidic residues). Over residues 191–206 (ASNNGRSMEPGSSHSA) the composition is skewed to polar residues. Phosphoserine; by host occurs at positions 192, 249, 257, and 260. Zn(2+) is bound by residues His318, Cys337, Cys341, Cys353, Cys355, Cys358, Cys362, and Cys365.

Belongs to the paramyxoviruses V protein family. In terms of assembly, interacts with host IFIH1/MDA5 and DHX58/LGP2. Interacts with host IRF3. Interacts with host RIGI regulatory protein (via CARDs domain) and host TRIM25 (via SPRY domain); these interactions prevent TRIM25-mediated ubiquitination of RIG-I and disrupts downstream RIG-I signaling.

The protein localises to the host cytoplasm. Functionally, plays an essential role in the inhibition of host immune response. Prevents the establishment of cellular antiviral state by blocking interferon-alpha/beta (IFN-alpha/beta) production and signaling pathway. Interacts with host IFIH1/MDA5 and DHX58/LGP2 to inhibit the transduction pathway involved in the activation of IFN-beta promoter, thus protecting the virus against cell antiviral state. Also interacts with and inhibits host IRF3. Blocks the type I interferon signaling pathway by disrupting the RIG-I signaling pathway. This is Protein V (P/V/C) from Sendai virus (strain Z) (SeV).